We begin with the raw amino-acid sequence, 961 residues long: Phosphofurin acidic cluster sorting protein 1 (961 aa).

The span at 1 to 19 shows a compositional bias: gly residues; the sequence is MAERGGAGGGPGGAGGGSS. Disordered stretches follow at residues 1-70 and 76-95; these read MAER…SSST and VAVA…RTPA. At A2 the chain carries N-acetylalanine. Over residues 20–30 the composition is skewed to low complexity; it reads QRGSGVAQSPQ. S28 is modified (phosphoserine). Residues 31 to 46 are compositionally biased toward pro residues; sequence QQPPQQPSQPQQPTPP. Phosphothreonine is present on T44. Positions 51 to 70 are enriched in low complexity; sequence ATSSSSSTSAAAASSSSSST. The residue at position 249 (Y249) is a Phosphotyrosine. The span at 260-271 shows a compositional bias: basic and acidic residues; sequence GIKSKLSDRSPD. 2 disordered regions span residues 260–297 and 375–426; these read GIKS…LHGQ and NPSD…GKDT. Acidic residues predominate over residues 274-291; the sequence is NYSEEEEESFSSEQEGSD. A coiled-coil region spans residues 351–375; that stretch reads HVSREQIREVEEDLDELYDSLEMYN. Phosphoserine is present on residues S377 and S379. Positions 404–426 are enriched in polar residues; that stretch reads MSQSSSQTEIGSLNSKGSLGKDT. S428 and S493 each carry phosphoserine. Disordered stretches follow at residues 475-540 and 758-802; these read EKVK…HSTQ and SPST…SMSS. Position 502 is a phosphothreonine (T502). S517, S526, S527, S529, and S532 each carry phosphoserine. Residues 768-802 show a composition bias toward low complexity; it reads SPVVSLTVPSTSPPSSSGLSRDATATPPSSPSMSS.

This sequence belongs to the PACS family. As to quaternary structure, associates with AP-1 and AP-3 but not with AP-2 complexes. Interacts with FURIN. Forms a ternary complex with furin and AP-1. Interacts with PKD2 (via acidic region). Interacts with SORL1. Interacts with WDR37.

It is found in the golgi apparatus. It localises to the trans-Golgi network. In terms of biological role, coat protein that is involved in the localization of trans-Golgi network (TGN) membrane proteins that contain acidic cluster sorting motifs. Controls the endosome-to-Golgi trafficking of furin and mannose-6-phosphate receptor by connecting the acidic-cluster-containing cytoplasmic domain of these molecules with the adapter-protein complex-1 (AP-1) of endosomal clathrin-coated membrane pits. Required for normal ER Ca2+ handling in lymphocytes. Together with WDR37, it plays an essential role in lymphocyte development, quiescence and survival. Required for stabilizing peripheral lymphocyte populations. This chain is Phosphofurin acidic cluster sorting protein 1 (Pacs1), found in Rattus norvegicus (Rat).